The chain runs to 130 residues: Small ribosomal subunit protein uS8 (130 aa).

The protein belongs to the universal ribosomal protein uS8 family. In terms of assembly, part of the 30S ribosomal subunit. Contacts proteins S5 and S12.

In terms of biological role, one of the primary rRNA binding proteins, it binds directly to 16S rRNA central domain where it helps coordinate assembly of the platform of the 30S subunit. In Photorhabdus laumondii subsp. laumondii (strain DSM 15139 / CIP 105565 / TT01) (Photorhabdus luminescens subsp. laumondii), this protein is Small ribosomal subunit protein uS8.